The chain runs to 103 residues: UPF0132 membrane protein AF_0105 (103 aa).

Helical transmembrane passes span 5 to 25, 35 to 55, and 58 to 78; these read VAGA…LLME, AMQS…LSFI, and IGVL…LVCI.

It belongs to the UPF0132 family.

It is found in the cell membrane. This chain is UPF0132 membrane protein AF_0105, found in Archaeoglobus fulgidus (strain ATCC 49558 / DSM 4304 / JCM 9628 / NBRC 100126 / VC-16).